We begin with the raw amino-acid sequence, 358 residues long: Homoserine O-acetyltransferase (358 aa).

Residues 52–337 form the AB hydrolase-1 domain; it reads NVILICHALT…DEPYGHDAFL (286 aa). S148 serves as the catalytic Nucleophile. R217 lines the substrate pocket. Residues D304 and H333 contribute to the active site. Residue D334 participates in substrate binding.

It belongs to the AB hydrolase superfamily. MetX family. Homodimer.

It localises to the cytoplasm. It catalyses the reaction L-homoserine + acetyl-CoA = O-acetyl-L-homoserine + CoA. It functions in the pathway amino-acid biosynthesis; L-methionine biosynthesis via de novo pathway; O-acetyl-L-homoserine from L-homoserine: step 1/1. Transfers an acetyl group from acetyl-CoA to L-homoserine, forming acetyl-L-homoserine. The polypeptide is Homoserine O-acetyltransferase (Chlorobium luteolum (strain DSM 273 / BCRC 81028 / 2530) (Pelodictyon luteolum)).